Reading from the N-terminus, the 358-residue chain is Pseudouridylate synthase RPUSD4, mitochondrial (358 aa).

The transit peptide at 1-12 directs the protein to the mitochondrion; the sequence is MRHAREVTFARL.

It belongs to the pseudouridine synthase RluA family.

The protein localises to the mitochondrion matrix. It is found in the nucleus. The protein resides in the cytoplasm. It catalyses the reaction uridine in 5S rRNA = pseudouridine in 5S rRNA. The catalysed reaction is a uridine in tRNA = a pseudouridine in tRNA. The enzyme catalyses a uridine in mRNA = a pseudouridine in mRNA. Functionally, catalyzes uridine to pseudouridine isomerization (pseudouridylation) of different mitochondrial RNA substrates. Acts on position 1397 in 16S mitochondrial ribosomal RNA (16S mt-rRNA). This modification is required for the assembly of 16S mt-rRNA into a functional mitochondrial ribosome. Acts on position 39 in mitochondrial tRNA(Phe). Also catalyzes pseudouridylation of mRNAs in nucleus: acts as a regulator of pre-mRNA splicing by mediating pseudouridylation of pre-mRNAs at locations associated with alternatively spliced regions. Pseudouridylation of pre-mRNAs near splice sites directly regulates mRNA splicing and mRNA 3'-end processing. This Danio rerio (Zebrafish) protein is Pseudouridylate synthase RPUSD4, mitochondrial.